The primary structure comprises 237 residues: Nodulation protein NolA (237 aa).

In terms of domain architecture, HTH merR-type spans 10–79 (RWRIGELAGA…LQEIRRAMDG (70 aa)). The segment at residues 13–32 (IGELAGATGVTVRTLHHYEH) is a DNA-binding region (H-T-H motif).

Its function is as follows. Involved in genotype-specific nodulation of soybeans. This is Nodulation protein NolA (nolA) from Bradyrhizobium sp. (strain NC92).